We begin with the raw amino-acid sequence, 744 residues long: Eukaryotic translation initiation factor 3 subunit B (744 aa).

A disordered region spans residues 1-20 (MAPSFDHLPDPEEDEYDEEE). Residues 11-20 (PEEDEYDEEE) show a composition bias toward acidic residues. An RRM domain is found at 40–126 (TFVVIDGLPE…HTLRVNKLTD (87 aa)). WD repeat units lie at residues 193–232 (DRQH…RQKR), 234–290 (AHPF…PLRS), 307–348 (PVKR…LLDK), and 577–622 (ADHY…LREE). A compositionally biased stretch (basic and acidic residues) spans 699 to 714 (EREDAGLPRDPLEPLK). A disordered region spans residues 699-722 (EREDAGLPRDPLEPLKSKMASGDE).

Belongs to the eIF-3 subunit B family. As to quaternary structure, component of the eukaryotic translation initiation factor 3 (eIF-3) complex.

Its subcellular location is the cytoplasm. Functionally, RNA-binding component of the eukaryotic translation initiation factor 3 (eIF-3) complex, which is involved in protein synthesis of a specialized repertoire of mRNAs and, together with other initiation factors, stimulates binding of mRNA and methionyl-tRNAi to the 40S ribosome. The eIF-3 complex specifically targets and initiates translation of a subset of mRNAs involved in cell proliferation. The polypeptide is Eukaryotic translation initiation factor 3 subunit B (prt1) (Sclerotinia sclerotiorum (strain ATCC 18683 / 1980 / Ss-1) (White mold)).